A 134-amino-acid chain; its full sequence is uncharacterized protein (134 aa).

The chain crosses the membrane as a helical span at residues 4–24 (NLLILLSLLLVVVAIMWWLYE).

Its subcellular location is the membrane. This is an uncharacterized protein from Invertebrate iridescent virus 6 (IIV-6).